Consider the following 593-residue polypeptide: Trehalose synthase/amylase TreS (593 aa).

Asp-90 is a binding site for substrate. Residue Asn-132 participates in Ca(2+) binding. His-133 and Gln-198 together coordinate substrate. Asp-200 is a binding site for Ca(2+). Substrate is bound at residue Arg-228. Residue Asp-230 is the Nucleophile of the active site. The Ca(2+) site is built by Tyr-234, Leu-235, and Glu-237. The active-site Proton donor is the Glu-272. Residues His-341 and Asp-342 each contribute to the substrate site.

Belongs to the glycosyl hydrolase 13 family. TreS subfamily. As to quaternary structure, homohexamer.

The catalysed reaction is D-maltose = alpha,alpha-trehalose. It catalyses the reaction Endohydrolysis of (1-&gt;4)-alpha-D-glucosidic linkages in polysaccharides containing three or more (1-&gt;4)-alpha-linked D-glucose units.. It participates in glycan biosynthesis; glycogen biosynthesis. The amylase activity is stimulated by addition of Ca(2+), but this cation and other divalent cations inhibit the trehalose synthase activity. In addition, trehalose synthase activity, but not amylase activity, is strongly inhibited, and in a competitive manner, by validoxylamine. On the other hand, amylase, but not trehalose synthase activity, is inhibited by the known transition-state amylase inhibitor, acarbose, suggesting the possibility of two different active sites. Other metal ions such as Mg(2+), Mn(2+), and Co(2+) are also somewhat effective in the stimulation of amylase activity, but Hg(2+), Cu(2+), Ni(2+) and Zn(2+) are inhibitory. In terms of biological role, catalyzes the reversible interconversion of maltose and trehalose by transglucosylation. Maltose is the preferred substrate. To a lesser extent, also displays amylase activity, catalyzing the endohydrolysis of (1-&gt;4)-alpha-D-glucosidic linkages in glycogen and maltooligosaccharides such as maltoheptaose, to produce maltose which then can be converted to trehalose. TreS plays a key role in the utilization of trehalose for the production of glycogen and alpha-glucan via the TreS-Pep2 branch involved in the biosynthesis of maltose-1-phosphate (M1P). Might also function as a sensor and/or regulator of trehalose levels within the cell. Thus, when trehalose levels in the cell become dangerously low, TreS can expedite the conversion of glycogen to maltose via its amylase activity and then convert the maltose to trehalose; but this enzyme also can expedite or promote the conversion of trehalose to glycogen when cytoplasmic trehalose levels become too high. Is also able to catalyze the hydrolytic cleavage of alpha-aryl glucosides, as well as alpha-glucosyl fluoride in vitro. In Mycolicibacterium smegmatis (strain ATCC 700084 / mc(2)155) (Mycobacterium smegmatis), this protein is Trehalose synthase/amylase TreS.